Consider the following 282-residue polypeptide: Glycine betaine/carnitine transport permease protein GbuB (282 aa).

The next 6 membrane-spanning stretches (helical) occupy residues 44–64 (VFDL…TFWV), 70–90 (KWGL…LDFW), 99–119 (LVLT…IWMA), 140–160 (AFVY…PGVV), 220–240 (IMLA…GLGT), and 251–271 (AGGG…LDRL). The ABC transmembrane type-1 domain maps to 93–272 (MTQTLTLVLT…IVAIILDRLT (180 aa)).

The protein belongs to the binding-protein-dependent transport system permease family. The complex is composed of two ATP-binding proteins (GbuA), two transmembrane proteins (GbuB) and a solute-binding protein (GbuC).

Its subcellular location is the cell membrane. The complex is activated by an osmotic gradient or by low temperature. In terms of biological role, part of the ABC transporter complex GbuABC involved in glycine betaine uptake. Responsible for the translocation of the substrate across the membrane. Involved, with BetL and OpuC, in osmoprotection and cryoprotection of Listeria. Can also uptake carnitine when carnitine is abundant in the growth medium. The sequence is that of Glycine betaine/carnitine transport permease protein GbuB (gbuB) from Listeria monocytogenes serotype 1/2a (strain 10403S).